A 2364-amino-acid polypeptide reads, in one-letter code: Cytotoxin-L (2364 aa).

Residues 1–91 (MSLVNKAQLQ…EVLELKNNSL (91 aa)) are four-helical bundle. The GT44 domain occupies 96 to 468 (KNLHFIWIGG…APDVRSTINL (373 aa)). Residues 96-468 (KNLHFIWIGG…APDVRSTINL (373 aa)) are glucosyltransferase region. Residues 101 to 103 (IWI), asparagine 139, 265 to 270 (LAAASD), and 286 to 288 (DVD) contribute to the UDP-alpha-D-glucose site. Mg(2+) contacts are provided by aspartate 288, glutamate 515, and serine 518. Residue 518 to 520 (SLW) coordinates UDP-alpha-D-glucose. Residues 544–799 (GEDDILDFSQ…KSKNLHELST (256 aa)) are autoprocessing region. 2 residues coordinate Zn(2+): glutamate 545 and aspartate 546. In terms of domain architecture, Peptidase C80 spans 567-774 (SSSMRTPNKE…EESIIKDISS (208 aa)). 1D-myo-inositol hexakisphosphate is bound by residues tyrosine 577, lysine 600, and lysine 647. Residue histidine 653 participates in Zn(2+) binding. The active-site For protease activity is the histidine 653. The active-site Nucleophile; for protease activity is cysteine 698. Position 757 (histidine 757) interacts with Zn(2+). Lysine 764, lysine 775, and lysine 792 together coordinate 1D-myo-inositol hexakisphosphate. Positions 800-1500 (LLQEIKNNSN…ESIIRNIYMP (701 aa)) are translocation region. 5 interaction with host SEMA6A and SEMA6B regions span residues 1433–1438 (CIKLIE), 1466–1471 (DNETKY), 1484–1495 (FTAEFSNESIIR), 1504–1511 (NLFIYSSK), and 1596–1601 (YNNLDP). 19 Cell wall-binding repeats span residues 1833–1852 (VSGL…PKNN), 1854–1873 (ITGF…TKSG), 1876–1895 (SIGE…QGIL), 1926–1945 (FIGK…NYRA), 1946–1965 (AVEW…KTGE), 1967–1986 (LKGL…NGIM), 1987–2006 (QTGF…DGVM), 2007–2026 (QVGY…NGER), 2057–2076 (YNGI…SNTA), 2077–2097 (VVGW…NTAE), 2099–2118 (CIGL…NGIR), 2119–2138 (QLGF…SGKI), 2139–2158 (ELGY…SGLV), 2209–2224 (ETGW…YFDP), 2227–2249 (KKAY…NGIM), 2250–2269 (KTGL…DGKM), 2270–2289 (QFGY…DGKM), 2320–2339 (YTGW…EYIA), and 2340–2359 (ATSS…DTAE). A receptor-binding (CROPS) region region spans residues 1835-2364 (GLIYINDSLY…PDTAELVVSE (530 aa)).

Belongs to the clostridial glucosylating toxin (LCGT) family. In terms of assembly, homomultimer; forms an inactive homomultimer at pH 8, which dissociates at pH 4, leading to cytotoxicity. Interacts with host SEMA6A; interaction promotes toxin entry into host cell. Interacts with host SEMA6B; interaction promotes toxin entry into host cell. Requires Zn(2+) as cofactor. Mn(2+) is required as a cofactor. Mg(2+) serves as cofactor. In terms of processing, undergoes autocatalytic cleavage to release the N-terminal part (Glucosyltransferase TcsL), which constitutes the active part of the toxin, in the host cytosol. 1D-myo-inositol hexakisphosphate-binding (InsP6) activates the peptidase C80 domain and promotes autoprocessing.

The protein localises to the secreted. The protein resides in the host endosome membrane. It is found in the host cytoplasm. It localises to the host cytosol. Its subcellular location is the host cell membrane. It catalyses the reaction L-threonyl-[protein] + UDP-alpha-D-glucose = 3-O-(alpha-D-glucosyl)-L-threonyl-[protein] + UDP + H(+). Protease activity is activated upon binding to 1D-myo-inositol hexakisphosphate (InsP6), which induces conformational reorganization. In terms of biological role, precursor of a cytotoxin that targets the vascular endothelium, inducing an anti-inflammatory effect and resulting in lethal toxic shock syndrome. TcsL constitutes the main toxin that mediates the pathology of P.sordellii infection, an anaerobic Gram-positive bacterium found in soil and in the gastrointestinal and vaginal tracts of animals and humans; although the majority of carriers are asymptomatic, pathogenic P.sordellii infections arise rapidly and are highly lethal. This form constitutes the precursor of the toxin: it enters into host cells and mediates autoprocessing to release the active toxin (Glucosyltransferase TcsL) into the host cytosol. Targets vascular endothelium by binding to the semaphorin proteins SEMA6A and SEMA6B, and enters host cells via clathrin-mediated endocytosis. Once entered into host cells, acidification in the endosome promotes the membrane insertion of the translocation region and formation of a pore, leading to translocation of the GT44 and peptidase C80 domains across the endosomal membrane. This activates the peptidase C80 domain and autocatalytic processing, releasing the N-terminal part (Glucosyltransferase TcsL), which constitutes the active part of the toxin, in the cytosol. Functionally, active form of the toxin, which is released into the host cytosol following autoprocessing and inactivates small GTPases. Acts by mediating monoglucosylation of small GTPases of the Ras (H-Ras/HRAS, K-Ras/KRAS and N-Ras/NRAS) family in host cells at the conserved threonine residue located in the switch I region ('Thr-37/35'), using UDP-alpha-D-glucose as the sugar donor. Does not catalyze monoglucosylation of Ral/RALA. Also able to catalyze monoglucosylation of some members of the Rho family (Rac1 and Rap2A), but with less efficiency than with Ras proteins. Monoglucosylation of host small GTPases completely prevents the recognition of the downstream effector, blocking the GTPases in their inactive form and leading to apoptosis. Induces an anti-inflammatory effect, mainly by inactivating Ras proteins which results in blockage of the cell cycle and killing of immune cells. The absence or moderate local inflammatory response allows C.sordellii spreading in deep tissues, production of toxin which is released in the general circulation and causes a toxic shock syndrome. The sequence is that of Cytotoxin-L from Paraclostridium sordellii (Clostridium sordellii).